The following is a 366-amino-acid chain: Protein BIG GRAIN 1-like B (366 aa).

Disordered regions lie at residues 42 to 73 (DSSTNSSSMRKTKHQNREDTRVSANRRDDFNR) and 129 to 148 (FERSPQNHRPNSSNKQEHGS). Residues 56-73 (QNREDTRVSANRRDDFNR) are compositionally biased toward basic and acidic residues.

This sequence belongs to the BIG GRAIN 1 (BG1) plant protein family.

The protein localises to the cell membrane. Functionally, involved in auxin transport. Regulator of the auxin signaling pathway. This Arabidopsis thaliana (Mouse-ear cress) protein is Protein BIG GRAIN 1-like B.